The following is a 499-amino-acid chain: Bifunctional purine biosynthesis protein PurH (499 aa).

Positions 1 to 144 (MIKRALISVF…KNFKDVVVLT (144 aa)) constitute an MGS-like domain.

This sequence belongs to the PurH family.

The enzyme catalyses (6R)-10-formyltetrahydrofolate + 5-amino-1-(5-phospho-beta-D-ribosyl)imidazole-4-carboxamide = 5-formamido-1-(5-phospho-D-ribosyl)imidazole-4-carboxamide + (6S)-5,6,7,8-tetrahydrofolate. The catalysed reaction is IMP + H2O = 5-formamido-1-(5-phospho-D-ribosyl)imidazole-4-carboxamide. It participates in purine metabolism; IMP biosynthesis via de novo pathway; 5-formamido-1-(5-phospho-D-ribosyl)imidazole-4-carboxamide from 5-amino-1-(5-phospho-D-ribosyl)imidazole-4-carboxamide (10-formyl THF route): step 1/1. The protein operates within purine metabolism; IMP biosynthesis via de novo pathway; IMP from 5-formamido-1-(5-phospho-D-ribosyl)imidazole-4-carboxamide: step 1/1. The protein is Bifunctional purine biosynthesis protein PurH of Clostridium botulinum (strain Loch Maree / Type A3).